The following is a 337-amino-acid chain: MLFSALLLEVIWILAADGGQHWTYEGPHGQDHWPASYPECGNNAQSPIDIQTDSVTFDPDLPALQPHGYDQPGTEPLDLHNNGHTVQLSLPSTLYLGGLPRKYVAAQLHLHWGQKGSPGGSEHQINSEATFAELHIVHYDSDSYDSLSEAAERPQGLAVLGILIEVGETKNIAYEHILSHLHEVRHKDQKTSVPPFNLRELLPKQLGQYFRYNGSLTTPPCYQSVLWTVFYRRSQISMEQLEKLQGTLFSTEEEPSKLLVQNYRALQPLNQRMVFASFIQAGSSYTTGEMLSLGVGILVGCLCLLLAVYFIARKIRKKRLENRKSVVFTSAQATTEA.

Residues 1–15 (MLFSALLLEVIWILA) form the signal peptide. The Extracellular segment spans residues 16 to 290 (ADGGQHWTYE…AGSSYTTGEM (275 aa)). An Alpha-carbonic anhydrase domain is found at 20–278 (QHWTYEGPHG…LNQRMVFASF (259 aa)). A disulfide bond links cysteine 40 and cysteine 221. Histidine 84 serves as the catalytic Proton donor/acceptor. Histidine 109, histidine 111, and histidine 135 together coordinate Zn(2+). N-linked (GlcNAc...) asparagine glycosylation occurs at asparagine 213. Substrate is bound at residue 217-218 (TT). A helical transmembrane segment spans residues 291-311 (LSLGVGILVGCLCLLLAVYFI). Over 312 to 337 (ARKIRKKRLENRKSVVFTSAQATTEA) the chain is Cytoplasmic. Serine 325 is modified (phosphoserine).

It belongs to the alpha-carbonic anhydrase family. Requires Zn(2+) as cofactor. As to expression, high expression in all parts of the central nervous system and lower expression in adult liver, heart, small intestine, colon, kidney, urinary bladder and skeletal muscle.

It localises to the membrane. The catalysed reaction is hydrogencarbonate + H(+) = CO2 + H2O. Its activity is regulated as follows. Activated by histamine, L-adrenaline, L- and D-histidine, and L- and D-phenylalanine. Inhibited by coumarins, saccharin, sulfonamide derivatives such as acetazolamide (AZA) and Foscarnet (phosphonoformate trisodium salt). Reversible hydration of carbon dioxide. In Homo sapiens (Human), this protein is Carbonic anhydrase 14 (CA14).